The sequence spans 62 residues: Conotoxin Mi5.2 (62 aa).

The signal sequence occupies residues 1–19 (MRCVPVFIILLLLIPSASS). A propeptide spanning residues 20–50 (VDVQPLTRDDVPLASFLDDARRTLRSPWMTR) is cleaved from the precursor.

This sequence belongs to the conotoxin T superfamily. Post-translationally, contains 2 disulfide bonds that can be either 'C1-C3, C2-C4' or 'C1-C4, C2-C3', since these disulfide connectivities have been observed for conotoxins with cysteine framework V (for examples, see AC P0DQQ7 and AC P81755). Expressed by the venom duct.

Its subcellular location is the secreted. In Conus miles (Soldier cone), this protein is Conotoxin Mi5.2.